We begin with the raw amino-acid sequence, 471 residues long: ATP synthase subunit beta (471 aa).

An ATP-binding site is contributed by 153–160 (GGAGVGKT).

The protein belongs to the ATPase alpha/beta chains family. F-type ATPases have 2 components, CF(1) - the catalytic core - and CF(0) - the membrane proton channel. CF(1) has five subunits: alpha(3), beta(3), gamma(1), delta(1), epsilon(1). CF(0) has four main subunits: a(1), b(1), b'(1) and c(9-12).

The protein resides in the cell membrane. The catalysed reaction is ATP + H2O + 4 H(+)(in) = ADP + phosphate + 5 H(+)(out). Produces ATP from ADP in the presence of a proton gradient across the membrane. The catalytic sites are hosted primarily by the beta subunits. The polypeptide is ATP synthase subunit beta (Chloroflexus aggregans (strain MD-66 / DSM 9485)).